A 213-amino-acid polypeptide reads, in one-letter code: V-type proton ATPase subunit c'' (213 aa).

The Vacuolar segment spans residues 1 to 14 (MNKESKDDDMSLGK). A helical transmembrane segment spans residues 15–35 (FSFSHFLYYLVLIVVIVYGLY). The Cytoplasmic segment spans residues 36–61 (KLFTGHGSDINFGKFLLRTSPYMWAN). Residues 62 to 82 (LGIALCVGLSVVGAAWGIFIT) form a helical membrane-spanning segment. The Vacuolar segment spans residues 83 to 100 (GSSMIGAGVRAPRITTKN). A helical membrane pass occupies residues 101-121 (LISIIFCEVVAIYGLIIAIVF). At 122-144 (SSKLTVATAENMYSKSNLYTGYS) the chain is on the cytoplasmic side. The chain crosses the membrane as a helical span at residues 145–165 (LFWAGITVGASNLICGIAVGI). Topologically, residues 166–183 (TGATAAISDAADSALFVK) are vacuolar. A helical transmembrane segment spans residues 184-204 (ILVIEIFGSILGLLGLIVGLL). Topologically, residues 205–213 (MAGKASEFQ) are cytoplasmic.

It belongs to the V-ATPase proteolipid subunit family. In terms of assembly, V-ATPase is a heteromultimeric enzyme composed of a peripheral catalytic V1 complex (components A to H) attached to an integral membrane V0 proton pore complex (components: a, c, c', c'', d, e, f and VOA1). The decameric c-ring forms the proton-conducting pore, and is composed of eight proteolipid subunits c, one subunit c' and one subunit c''.

It localises to the vacuole membrane. Functionally, proton-conducting pore forming subunit of the V0 complex of vacuolar(H+)-ATPase (V-ATPase), a multisubunit enzyme composed of a peripheral complex (V1) that hydrolyzes ATP and a membrane integral complex (V0) that translocates protons. V-ATPase is responsible for acidifying and maintaining the pH of intracellular compartments. This Saccharomyces cerevisiae (strain ATCC 204508 / S288c) (Baker's yeast) protein is V-type proton ATPase subunit c'' (VMA16).